The chain runs to 238 residues: Lactate utilization protein A (238 aa).

The protein belongs to the LutA/YkgE family.

Its function is as follows. Is involved in L-lactate degradation and allows cells to grow with lactate as the sole carbon source. The polypeptide is Lactate utilization protein A (Bacillus pumilus (strain SAFR-032)).